The chain runs to 457 residues: tRNA modification GTPase MnmE (457 aa).

The (6S)-5-formyl-5,6,7,8-tetrahydrofolate site is built by Arg-22, Glu-86, and Arg-125. Residues 221–381 form the TrmE-type G domain; it reads GLRAVLAGRP…LEAEVARVAG (161 aa). Asn-231 is a K(+) binding site. Residues 231–236, 250–256, and 275–278 each bind GTP; these read NVGKSS, TPIPGTT, and DTAG. Residue Ser-235 coordinates Mg(2+). Residues Thr-250, Ile-252, and Thr-255 each coordinate K(+). Thr-256 is a Mg(2+) binding site. Lys-457 serves as a coordination point for (6S)-5-formyl-5,6,7,8-tetrahydrofolate.

It belongs to the TRAFAC class TrmE-Era-EngA-EngB-Septin-like GTPase superfamily. TrmE GTPase family. As to quaternary structure, homodimer. Heterotetramer of two MnmE and two MnmG subunits. It depends on K(+) as a cofactor.

The protein localises to the cytoplasm. Functionally, exhibits a very high intrinsic GTPase hydrolysis rate. Involved in the addition of a carboxymethylaminomethyl (cmnm) group at the wobble position (U34) of certain tRNAs, forming tRNA-cmnm(5)s(2)U34. This Symbiobacterium thermophilum (strain DSM 24528 / JCM 14929 / IAM 14863 / T) protein is tRNA modification GTPase MnmE.